The chain runs to 483 residues: Glutamyl-tRNA(Gln) amidotransferase subunit A (483 aa).

Residues lysine 76 and serine 151 each act as charge relay system in the active site. Catalysis depends on serine 175, which acts as the Acyl-ester intermediate.

The protein belongs to the amidase family. GatA subfamily. Heterotrimer of A, B and C subunits.

It catalyses the reaction L-glutamyl-tRNA(Gln) + L-glutamine + ATP + H2O = L-glutaminyl-tRNA(Gln) + L-glutamate + ADP + phosphate + H(+). Its function is as follows. Allows the formation of correctly charged Gln-tRNA(Gln) through the transamidation of misacylated Glu-tRNA(Gln) in organisms which lack glutaminyl-tRNA synthetase. The reaction takes place in the presence of glutamine and ATP through an activated gamma-phospho-Glu-tRNA(Gln). The polypeptide is Glutamyl-tRNA(Gln) amidotransferase subunit A (Pseudomonas putida (strain W619)).